The following is a 1654-amino-acid chain: MSTEPVSSLALPAPAILPTTPIPASTQQASSLVSDQIQEASTASQKSVTSITQPPIPSQQQPPQHITANHPASIAAAATVALSATLLNPNEWNALASTSMVTLDDLRSAFLEQRQQQLKDLERSHRESLREMIFMSENYDKEDVAGSPWKLGQSLQVAEDDAREHVKSFLDQHRLALDPKMSIKDHILEQPKLLRQRVSQELKTGPIELAPPPTPTSATAPSAGEAQRDRDLKREIEQNNLHRSQAVARAAAAVQAHAIAEGVAKIKPLTITAAESQGVRVAPLQPGQVPSFVIESTTPIAHIVASSDSSTAVLVASDAQKVDSHTTMSAAEAVTPAIKVESTDNIDASPSKASHALEKAVSPVPGLARNASTQSTSLRVPPSPMVVPTIPENITAPPLHPTLQVLAPNPLSVTYAASLRPLPPDPTRRITGAGLSGGAIHHRSGRKITSLSNHSNVNSYSSIAAAKIGPAGSGQADLYRWYVRARASPGAGMVGKADKCLMTSDWRVAFNEQRFVRAMARIEKLKAQGEWSFRQPKKQKGPVVRKAHWDHLLEEMKWLQTDFREERRWKMTVAFHLAHEVAAWHRARTPAERAQFCVHVQRSYRHRTISDNVEQHNTDKLSAKEVVSSSQPFQAAAASLDDVEMTHSTSSSHIQKDGEPATVKAESGQPVEDADVTMDGGADADEAVTQAVESALQTTNEAASARAEEMDADGEDDADTDANDVEAATAALVSGEPSKPPKVEVVREPLSQPQPMPTLADVSVPTTSSATPTVPASSTPTTAANDKLVHALRSQPKDADSTLTAEMPPQLLATLRAPIFSTSVTTTVVSPAALLDSLNPEAAAALLGIEVSDLANAADLLEPGSLSFSKMFPELPLYGGVSLPESNSKSDRRWDEGSLNQPPRLTHVTKLLDSRPLLVSTLEPSKNRANGRWLADSDWVVAAEQSDPLRGVTDGADTALPPMPGSLLFARKSNRAAKDASGPASTTPAEPASPDARAALFVWTPDEDNYLMTLAKQYHNNWALVADLFNSTRLNTATDKREAWDCYDRCKRIEQAAAEGKPPPGPPPMPAPAADADKDSKKGDGKDADASSSKRDKLSKKSGSKHDGSKRKQRRSNLMEVMRRSAKRREATKQAQQTQQTKKVNLNTHETHAQIKAGPAITPQSLSALKTERDQAALRQYYEQQRAQLAYQQQQQQQQRLLAQQAQAQRMAQQQGTAGTSAPAATAVTQAGKAGTAIVAGGTGGVGNVSLLPAGTPAASAGPAGQAQQKAATGQGTNQAIAQQTQQQQQQPQSQQTAQMQVQQPPAAAAAAQQQQQQQVQLQSQLQASQAAQMQNLYAQMQQQQQQQQRQQQQQLGQAAAGLAQVRPGVGALTQQQLATLTPQQQQQYHAQLAAATAAAQQQQLRSQMAAVAAAQGGQAGFQLPNAQAQAQAQAQAQFQLMQQQQQQQNVMQNQGRPAMAQQAQQAALQMYQQQQRQAQMRPPQPTQPFAARPNARPGTAASSQAKPQAAARSATPAPPMPATVQALQQQLAISLATSNLSAEQINGLAIQLYKQAQQQQQQQQQQQQQQQQQQQQQQQQQQQQQQQQQQQQQQQQQQQPQQPAPTQQRPPPQQLLNQAIQALAAQTQKNQQPAPTVHGVTGSPVRPPTPRPS.

Disordered regions lie at residues 1–66 (MSTE…PQHI), 204–229 (TGPIELAPPPTPTSATAPSAGEAQRD), 609–679 (ISDN…VTMD), 693–720 (ESALQTTNEAASARAEEMDADGEDDADT), 883–902 (LPESNSKSDRRWDEGSLNQP), and 974–993 (NRAAKDASGPASTTPAEPAS). The span at 7-26 (SSLALPAPAILPTTPIPAST) shows a compositional bias: low complexity. Residues 27–48 (QQASSLVSDQIQEASTASQKSV) are compositionally biased toward polar residues. The span at 49-64 (TSITQPPIPSQQQPPQ) shows a compositional bias: low complexity. The HSA domain maps to 536-611 (PKKQKGPVVR…RSYRHRTISD (76 aa)). Positions 613–623 (VEQHNTDKLSA) are enriched in basic and acidic residues. The span at 628 to 639 (SSSQPFQAAAAS) shows a compositional bias: low complexity. The span at 693 to 702 (ESALQTTNEA) shows a compositional bias: polar residues. A compositionally biased stretch (acidic residues) spans 710–720 (MDADGEDDADT). Residues 980 to 993 (ASGPASTTPAEPAS) are compositionally biased toward low complexity. The 54-residue stretch at 995–1048 (DARAALFVWTPDEDNYLMTLAKQYHNNWALVADLFNSTRLNTATDKREAWDCYD) folds into the Myb-like domain. Disordered stretches follow at residues 1057-1159 (AAEG…KAGP), 1257-1304 (PAAS…QVQQ), 1449-1523 (QNVM…PMPA), and 1570-1654 (QQQQ…PRPS). The span at 1061–1071 (KPPPGPPPMPA) shows a compositional bias: pro residues. Positions 1075–1096 (DADKDSKKGDGKDADASSSKRD) are enriched in basic and acidic residues. Over residues 1097–1115 (KLSKKSGSKHDGSKRKQRR) the composition is skewed to basic residues. The segment covering 1133-1143 (KQAQQTQQTKK) has biased composition (low complexity). Low complexity-rich tracts occupy residues 1449 to 1482 (QNVMQNQGRPAMAQQAQQAALQMYQQQQRQAQMR), 1500 to 1516 (TAASSQAKPQAAARSAT), 1570 to 1608 (QQQQQQQQQQQQQQQQQQQQQQQQQQQQQQQPQQPAPTQ), and 1615 to 1629 (QLLNQAIQALAAQTQ).

It belongs to the EAF1 family. Component of the NuA4 histone acetyltransferase complex.

The protein localises to the nucleus. Its function is as follows. Component of the NuA4 histone acetyltransferase complex which is involved in transcriptional activation of selected genes principally by acetylation of nucleosomal histone H4 and H2A. The NuA4 complex is also involved in DNA repair. The polypeptide is Chromatin modification-related protein EAF1 (EAF1) (Mycosarcoma maydis (Corn smut fungus)).